The chain runs to 188 residues: Elongation factor P 1 (188 aa).

The protein belongs to the elongation factor P family.

It is found in the cytoplasm. It participates in protein biosynthesis; polypeptide chain elongation. Involved in peptide bond synthesis. Stimulates efficient translation and peptide-bond synthesis on native or reconstituted 70S ribosomes in vitro. Probably functions indirectly by altering the affinity of the ribosome for aminoacyl-tRNA, thus increasing their reactivity as acceptors for peptidyl transferase. This Porphyromonas gingivalis (strain ATCC BAA-308 / W83) protein is Elongation factor P 1 (efp1).